Consider the following 143-residue polypeptide: Small ribosomal subunit protein uS11c (143 aa).

It belongs to the universal ribosomal protein uS11 family. In terms of assembly, part of the 30S ribosomal subunit.

It is found in the plastid. It localises to the chloroplast. This chain is Small ribosomal subunit protein uS11c, found in Saccharum officinarum (Sugarcane).